A 62-amino-acid chain; its full sequence is Large ribosomal subunit protein bL28 (62 aa).

A disordered region spans residues 1-23; sequence MARRCFVTGKSAKAGNARSHSMR.

Belongs to the bacterial ribosomal protein bL28 family.

The polypeptide is Large ribosomal subunit protein bL28 (Brevibacillus brevis (strain 47 / JCM 6285 / NBRC 100599)).